The primary structure comprises 192 residues: Probable cobalt-precorrin-6B C(15)-methyltransferase (decarboxylating) (192 aa).

Residues threonine 17, 41–45 (GCGTG), aspartate 62, and alanine 91 each bind S-adenosyl-L-methionine.

Belongs to the methyltransferase superfamily. Archaeal-type CbiT family. As to quaternary structure, homotetramer.

The catalysed reaction is Co-precorrin-6B + S-adenosyl-L-methionine = Co-precorrin-7 + S-adenosyl-L-homocysteine + CO2. It functions in the pathway cofactor biosynthesis; adenosylcobalamin biosynthesis; cob(II)yrinate a,c-diamide from sirohydrochlorin (anaerobic route): step 8/10. Its function is as follows. Catalyzes the methylation of C-15 in cobalt-precorrin-6B followed by the decarboxylation of C-12 to form cobalt-precorrin-7. The chain is Probable cobalt-precorrin-6B C(15)-methyltransferase (decarboxylating) from Methanothermobacter thermautotrophicus (strain ATCC 29096 / DSM 1053 / JCM 10044 / NBRC 100330 / Delta H) (Methanobacterium thermoautotrophicum).